The primary structure comprises 145 residues: Deoxyuridine 5'-triphosphate nucleotidohydrolase (145 aa).

Residues 62 to 64 (RSG), asparagine 75, 79 to 81 (TVD), and lysine 89 each bind substrate.

The protein belongs to the dUTPase family. The cofactor is Mg(2+).

The enzyme catalyses dUTP + H2O = dUMP + diphosphate + H(+). It participates in pyrimidine metabolism; dUMP biosynthesis; dUMP from dCTP (dUTP route): step 2/2. Its function is as follows. This enzyme is involved in nucleotide metabolism: it produces dUMP, the immediate precursor of thymidine nucleotides and it decreases the intracellular concentration of dUTP so that uracil cannot be incorporated into DNA. The polypeptide is Deoxyuridine 5'-triphosphate nucleotidohydrolase (Helicobacter pylori (strain Shi470)).